The primary structure comprises 186 residues: Imidazole glycerol phosphate synthase subunit HisH (186 aa).

In terms of domain architecture, Glutamine amidotransferase type-1 spans 1 to 186; that stretch reads MIAIIDYGSG…KLLRNFGELA (186 aa). The Nucleophile role is filled by C72. Residues H167 and E169 contribute to the active site.

Heterodimer of HisH and HisF.

The protein resides in the cytoplasm. It catalyses the reaction 5-[(5-phospho-1-deoxy-D-ribulos-1-ylimino)methylamino]-1-(5-phospho-beta-D-ribosyl)imidazole-4-carboxamide + L-glutamine = D-erythro-1-(imidazol-4-yl)glycerol 3-phosphate + 5-amino-1-(5-phospho-beta-D-ribosyl)imidazole-4-carboxamide + L-glutamate + H(+). The catalysed reaction is L-glutamine + H2O = L-glutamate + NH4(+). The protein operates within amino-acid biosynthesis; L-histidine biosynthesis; L-histidine from 5-phospho-alpha-D-ribose 1-diphosphate: step 5/9. Its function is as follows. IGPS catalyzes the conversion of PRFAR and glutamine to IGP, AICAR and glutamate. The HisH subunit catalyzes the hydrolysis of glutamine to glutamate and ammonia as part of the synthesis of IGP and AICAR. The resulting ammonia molecule is channeled to the active site of HisF. The polypeptide is Imidazole glycerol phosphate synthase subunit HisH (Picrophilus torridus (strain ATCC 700027 / DSM 9790 / JCM 10055 / NBRC 100828 / KAW 2/3)).